The chain runs to 233 residues: MALRTLASKNALSFALGGAARPSAESARGVTTVALPDLSYDFGALEPVISGEIMRLHHQKNHATYVVNYNKALEQIDDVVVKGDDSAVVQLQGAIKFNGGGHVNHSIFWKNLKPISEGGGEPPHGKLGWAIDEDFGSFEALVKRMNAEGAALQGSGWVWLALDKEAKKVSVETTANQDPLVTKGASLVPLLGIDVWEHAYYLQYKNVRPDYLNNIWKVMNWKYAGEVYENVLA.

Residues 1–29 constitute a mitochondrion transit peptide; the sequence is MALRTLASKNALSFALGGAARPSAESARG. Mn(2+) is bound by residues His-57, His-105, Asp-194, and His-198.

It belongs to the iron/manganese superoxide dismutase family. Homotetramer. The cofactor is Mn(2+). In terms of tissue distribution, predominantly expressed in the embryo late in embryogenesis.

Its subcellular location is the mitochondrion matrix. It catalyses the reaction 2 superoxide + 2 H(+) = H2O2 + O2. Destroys superoxide anion radicals which are normally produced within the cells and which are toxic to biological systems. This Zea mays (Maize) protein is Superoxide dismutase [Mn] 3.3, mitochondrial (SODA.2).